A 94-amino-acid polypeptide reads, in one-letter code: MPRAQDVAQSDATLSSPATPASYEAAMAELETLVASMESGELPLEASLAAYRRGAELVRYCQQVLERVEQQVRVLDGDALKPLAGEGTNEQGGA.

The protein belongs to the XseB family. Heterooligomer composed of large and small subunits.

It is found in the cytoplasm. The catalysed reaction is Exonucleolytic cleavage in either 5'- to 3'- or 3'- to 5'-direction to yield nucleoside 5'-phosphates.. Functionally, bidirectionally degrades single-stranded DNA into large acid-insoluble oligonucleotides, which are then degraded further into small acid-soluble oligonucleotides. The protein is Exodeoxyribonuclease 7 small subunit of Ralstonia nicotianae (strain ATCC BAA-1114 / GMI1000) (Ralstonia solanacearum).